The following is a 457-amino-acid chain: Adenylosuccinate synthetase (457 aa).

Residues 40 to 46 and 70 to 72 contribute to the GTP site; these read GDEGKGK and GHT. Residue Asp-41 is the Proton acceptor of the active site. Mg(2+)-binding residues include Asp-41 and Gly-70. IMP is bound by residues 41-44, 68-71, Thr-161, Arg-175, Asn-255, Thr-270, and Arg-334; these read DEGK and NAGH. The active-site Proton donor is His-71. Residue 330-336 coordinates substrate; the sequence is VTTGRKR. GTP contacts are provided by residues Arg-336, 362–364, and 444–446; these read KLD and GVG.

This sequence belongs to the adenylosuccinate synthetase family. In terms of assembly, homodimer. It depends on Mg(2+) as a cofactor.

It is found in the cytoplasm. It carries out the reaction IMP + L-aspartate + GTP = N(6)-(1,2-dicarboxyethyl)-AMP + GDP + phosphate + 2 H(+). Its pathway is purine metabolism; AMP biosynthesis via de novo pathway; AMP from IMP: step 1/2. Its function is as follows. Plays an important role in the de novo pathway and in the salvage pathway of purine nucleotide biosynthesis. Catalyzes the first committed step in the biosynthesis of AMP from IMP. The sequence is that of Adenylosuccinate synthetase from Caenorhabditis elegans.